We begin with the raw amino-acid sequence, 143 residues long: Spore coat protein P (143 aa).

The sHSP domain maps to 34-143 (FFDSEASTFV…VETVAFNKGL (110 aa)).

The protein belongs to the small heat shock protein (HSP20) family.

This Bacillus subtilis (strain 168) protein is Spore coat protein P (cotP).